We begin with the raw amino-acid sequence, 453 residues long: Putative receptor-like protein kinase At2g30940 (453 aa).

Residues 60–80 traverse the membrane as a helical segment; sequence ASASIAFLLVLIISVLLCFIF. Residue Thr155 is modified to Phosphothreonine. The Protein kinase domain maps to 166–428; that stretch reads FADDNVITKG…IHMLQPHDLL (263 aa). Residues 172-180 and Lys194 each bind ATP; that span reads ITKGDSSTV. Tyr240 carries the post-translational modification Phosphotyrosine. Asp293 acts as the Proton acceptor in catalysis. A Phosphoserine modification is found at Ser297. Thr322 bears the Phosphothreonine mark.

This sequence belongs to the protein kinase superfamily.

The protein localises to the cell membrane. It catalyses the reaction L-seryl-[protein] + ATP = O-phospho-L-seryl-[protein] + ADP + H(+). The catalysed reaction is L-threonyl-[protein] + ATP = O-phospho-L-threonyl-[protein] + ADP + H(+). The chain is Putative receptor-like protein kinase At2g30940 from Arabidopsis thaliana (Mouse-ear cress).